The primary structure comprises 445 residues: Disintegrin and metalloproteinase domain-containing protein 18 (445 aa).

Residues 1 to 106 (IYRKHLKYIG…LDMQCLGDLS (106 aa)) form the Peptidase M12B domain. Topologically, residues 1–409 (IYRKHLKYIG…TKRLSQHADS (409 aa)) are extracellular. Cystine bridges form between Cys-18–Cys-101, Cys-60–Cys-85, and Cys-62–Cys-67. 2 N-linked (GlcNAc...) asparagine glycosylation sites follow: Asn-19 and Asn-59. Asn-84 and Asn-131 each carry an N-linked (GlcNAc...) asparagine glycan. Residues 113–202 (QSVCGNGIVE…HCVPDTFALD (90 aa)) enclose the Disintegrin domain. Cys-173 and Cys-194 form a disulfide bridge. Residues Asn-333 and Asn-340 are each glycosylated (N-linked (GlcNAc...) asparagine). Residues 342–376 (TGNDCNAAKKCKGNGICNNFGHCQCFPDYRPPDCN) form the EGF-like domain. 3 cysteine pairs are disulfide-bonded: Cys-346–Cys-358, Cys-352–Cys-364, and Cys-366–Cys-375. Residues 410–430 (WVILGFFIFLPFIMTLFLGII) traverse the membrane as a helical segment. Over 431-445 (KRNERKIVPQKEQER) the chain is Cytoplasmic.

Post-translationally, the prodomain and the metalloprotease-like domain are cleaved during the epididymal maturation of the spermatozoa. As to expression, expressed specifically in testis.

The protein resides in the membrane. Sperm surface membrane protein that may be involved in spermatogenesis and fertilization. This is a non catalytic metalloprotease-like protein. In Rattus norvegicus (Rat), this protein is Disintegrin and metalloproteinase domain-containing protein 18 (Adam18).